A 101-amino-acid chain; its full sequence is Acylphosphatase (101 aa).

Residues 12 to 98 (RVHVFVTGRV…EGLRGFEVKR (87 aa)) enclose the Acylphosphatase-like domain. Active-site residues include Arg27 and Asn45.

This sequence belongs to the acylphosphatase family.

It catalyses the reaction an acyl phosphate + H2O = a carboxylate + phosphate + H(+). The chain is Acylphosphatase (acyP) from Trichormus variabilis (strain ATCC 29413 / PCC 7937) (Anabaena variabilis).